The chain runs to 175 residues: Disulfide bond formation protein B (175 aa).

The Cytoplasmic segment spans residues 1–13; it reads MTALTRFAHSRSS. Residues 14-30 traverse the membrane as a helical segment; that stretch reads WFLLTGTAIGLEAAALY. The Periplasmic portion of the chain corresponds to 31 to 48; it reads FQYVMKLDPCVMCIYQRL. The cysteines at positions 40 and 43 are disulfide-linked. Residues 49 to 64 traverse the membrane as a helical segment; sequence AVFGILVAGLIGMTAP. The Cytoplasmic segment spans residues 65-71; the sequence is KYRLIRI. A helical membrane pass occupies residues 72–89; that stretch reads LGASCWAVSATWGLKLAL. Topologically, residues 90 to 144 are periplasmic; that stretch reads ALVNMQNNPSPFATCSFLPEFPTWMPLHEWFPAVMLPTGMCTDLPWRFMDVTMAE. A disulfide bridge links Cys104 with Cys130. Residues 145–163 traverse the membrane as a helical segment; it reads WMVVVFSTFLVIWLLFIVP. At 164-175 the chain is on the cytoplasmic side; that stretch reads ILSGSTKPSLYK.

It belongs to the DsbB family.

The protein resides in the cell inner membrane. Required for disulfide bond formation in some periplasmic proteins. Acts by oxidizing the DsbA protein. This is Disulfide bond formation protein B from Shewanella sp. (strain W3-18-1).